The chain runs to 513 residues: ATP synthase subunit alpha (513 aa).

Residue 169–176 coordinates ATP; sequence GDRQTGKT.

The protein belongs to the ATPase alpha/beta chains family. As to quaternary structure, F-type ATPases have 2 components, CF(1) - the catalytic core - and CF(0) - the membrane proton channel. CF(1) has five subunits: alpha(3), beta(3), gamma(1), delta(1), epsilon(1). CF(0) has three main subunits: a(1), b(2) and c(9-12). The alpha and beta chains form an alternating ring which encloses part of the gamma chain. CF(1) is attached to CF(0) by a central stalk formed by the gamma and epsilon chains, while a peripheral stalk is formed by the delta and b chains.

It is found in the cell inner membrane. It carries out the reaction ATP + H2O + 4 H(+)(in) = ADP + phosphate + 5 H(+)(out). Produces ATP from ADP in the presence of a proton gradient across the membrane. The alpha chain is a regulatory subunit. This Haemophilus influenzae (strain PittGG) protein is ATP synthase subunit alpha.